A 68-amino-acid polypeptide reads, in one-letter code: Small integral membrane protein 45 (68 aa).

Residues 7–27 (WFVPVYLVISVLILVGFGACI) form a helical membrane-spanning segment.

In terms of tissue distribution, highly expressed in brain.

The protein resides in the nucleus. Its subcellular location is the cytoplasm. It localises to the membrane. Functionally, plays a role in the regulation of neuron maturation. In Homo sapiens (Human), this protein is Small integral membrane protein 45.